Here is a 201-residue protein sequence, read N- to C-terminus: Ras-related protein Ral-a (201 aa).

Position 18-25 (18-25 (GSGGVGKS)) interacts with GTP. The Effector region motif lies at 40 to 48 (YEPTKADSY). Residues 65–69 (DTAGQ) and 124–127 (NKCD) each bind GTP. Cys198 carries the post-translational modification Cysteine methyl ester. Residue Cys198 is the site of S-geranylgeranyl cysteine attachment. A propeptide spans 199-201 (TLL) (removed in mature form).

Belongs to the small GTPase superfamily. Ras family.

It is found in the cell membrane. Its subcellular location is the cleavage furrow. The protein localises to the midbody. It localises to the midbody ring. The catalysed reaction is GTP + H2O = GDP + phosphate + H(+). The chain is Ras-related protein Ral-a (Rala) from Drosophila melanogaster (Fruit fly).